The primary structure comprises 308 residues: UPF0282 protein M164_2122 (308 aa).

It belongs to the UPF0282 family.

The chain is UPF0282 protein M164_2122 from Saccharolobus islandicus (strain M.16.4 / Kamchatka #3) (Sulfolobus islandicus).